A 249-amino-acid polypeptide reads, in one-letter code: Proteasome activator complex subunit 1 (249 aa).

Residues 60-102 (PLDIPVPDPVKEKEKEERKKQQEKEDKDEKKKGEDEDKGPPCG) are disordered. A compositionally biased stretch (basic and acidic residues) spans 68 to 98 (PVKEKEKEERKKQQEKEDKDEKKKGEDEDKG).

This sequence belongs to the PA28 family. Heterodimer of PSME1 and PSME2, which forms a hexameric ring. PSME1 can form homoheptamers.

Its function is as follows. Implicated in immunoproteasome assembly and required for efficient antigen processing. The PA28 activator complex enhances the generation of class I binding peptides by altering the cleavage pattern of the proteasome. The protein is Proteasome activator complex subunit 1 (PSME1) of Sus scrofa (Pig).